Consider the following 164-residue polypeptide: Thiol peroxidase (164 aa).

The Thioredoxin domain maps to 18–163 (VKTGETAPEF…FESALEAYRN (146 aa)). Cys60 (cysteine sulfenic acid (-SOH) intermediate) is an active-site residue. Cys60 and Cys93 are disulfide-bonded.

The protein belongs to the peroxiredoxin family. Tpx subfamily. Homodimer.

The enzyme catalyses a hydroperoxide + [thioredoxin]-dithiol = an alcohol + [thioredoxin]-disulfide + H2O. In terms of biological role, thiol-specific peroxidase that catalyzes the reduction of hydrogen peroxide and organic hydroperoxides to water and alcohols, respectively. Plays a role in cell protection against oxidative stress by detoxifying peroxides. The protein is Thiol peroxidase of Staphylococcus saprophyticus subsp. saprophyticus (strain ATCC 15305 / DSM 20229 / NCIMB 8711 / NCTC 7292 / S-41).